The following is a 444-amino-acid chain: UDP-N-acetylmuramate--L-alanine ligase (444 aa).

Residue 110-116 (GAHGKTS) participates in ATP binding.

This sequence belongs to the MurCDEF family.

It localises to the cytoplasm. It carries out the reaction UDP-N-acetyl-alpha-D-muramate + L-alanine + ATP = UDP-N-acetyl-alpha-D-muramoyl-L-alanine + ADP + phosphate + H(+). It functions in the pathway cell wall biogenesis; peptidoglycan biosynthesis. Cell wall formation. This is UDP-N-acetylmuramate--L-alanine ligase from Streptococcus sanguinis (strain SK36).